Consider the following 89-residue polypeptide: HssA/B-like protein 10 (89 aa).

This sequence belongs to the hssA/B family.

The protein is HssA/B-like protein 10 (hssl10) of Dictyostelium discoideum (Social amoeba).